The following is a 114-amino-acid chain: ATP-dependent Clp protease adapter protein ClpS (114 aa).

It belongs to the ClpS family. Binds to the N-terminal domain of the chaperone ClpA.

In terms of biological role, involved in the modulation of the specificity of the ClpAP-mediated ATP-dependent protein degradation. This is ATP-dependent Clp protease adapter protein ClpS from Bdellovibrio bacteriovorus (strain ATCC 15356 / DSM 50701 / NCIMB 9529 / HD100).